Consider the following 542-residue polypeptide: Prolyl 3-hydroxylase OGFOD1 (542 aa).

The region spanning 134–239 (DLESTIDMSC…RLSISGWFHG (106 aa)) is the Fe2OG dioxygenase domain. The Fe cation site is built by histidine 155 and aspartate 157. Tyrosine 169 contributes to the 2-oxoglutarate binding site. A Fe cation-binding site is contributed by histidine 218. Arginine 230 contacts 2-oxoglutarate. The segment at 373 to 435 (EDEMNDKKEA…TKKESSVPTC (63 aa)) is disordered. Over residues 400 to 416 (ENNQTAISNNSQQSNEQ) the composition is skewed to polar residues.

It belongs to the TPA1 family. In terms of assembly, monomer. Fe(2+) is required as a cofactor. The cofactor is L-ascorbate.

It localises to the cytoplasm. The protein localises to the nucleus. The enzyme catalyses [ribosomal protein uS12]-L-proline + 2-oxoglutarate + O2 = [ribosomal protein uS12]-(3S)-3-hydroxy-L-proline + succinate + CO2. Prolyl 3-hydroxylase that catalyzes 3-hydroxylation of 'Pro-62' of small ribosomal subunit uS12 (RPS23), thereby regulating protein translation termination efficiency. Involved in stress granule formation. The protein is Prolyl 3-hydroxylase OGFOD1 (OGFOD1) of Pongo abelii (Sumatran orangutan).